The sequence spans 519 residues: Maturase K (519 aa).

This sequence belongs to the intron maturase 2 family. MatK subfamily.

The protein resides in the plastid. It localises to the chloroplast. In terms of biological role, usually encoded in the trnK tRNA gene intron. Probably assists in splicing its own and other chloroplast group II introns. This is Maturase K from Keteleeria davidiana (David's keteleeria).